The chain runs to 456 residues: MFS-type transporter SLC18B1 (456 aa).

Met1 bears the N-acetylmethionine mark. The disordered stretch occupies residues Met1–Glu24. Residues Met1–Gln33 are Cytoplasmic-facing. The span at Pro10–Gly23 shows a compositional bias: low complexity. At Ser21 the chain carries Phosphoserine. A helical transmembrane segment spans residues Val34–Leu54. Over Gly55 to Thr70 the chain is Extracellular. A helical membrane pass occupies residues Ile71 to Gly91. The Cytoplasmic segment spans residues Asn92–Lys100. A helical transmembrane segment spans residues Phe101–Asp121. Over Arg122–Pro127 the chain is Extracellular. Residues Val128–Met148 form a helical membrane-spanning segment. At Thr149–Asn161 the chain is on the cytoplasmic side. The helical transmembrane segment at Asn162 to Val184 threads the bilayer. Residues Gly185–Glu195 are Extracellular-facing. Residues Val196–Leu216 traverse the membrane as a helical segment. The Cytoplasmic portion of the chain corresponds to Pro217–Lys230. Residues Leu231–Phe251 form a helical membrane-spanning segment. Topologically, residues Gly252–Tyr272 are extracellular. A helical membrane pass occupies residues Val273–Leu293. At Leu294–Trp304 the chain is on the cytoplasmic side. The chain crosses the membrane as a helical span at residues Leu305–Ile325. Residues Leu326–Gln331 are Extracellular-facing. Residues Leu332–Pro352 traverse the membrane as a helical segment. At Thr353 to Ser377 the chain is on the cytoplasmic side. The helical transmembrane segment at Gly378–Leu398 threads the bilayer. The Extracellular segment spans residues Tyr399–Ala407. Residues Ala408–Leu428 form a helical membrane-spanning segment. The Cytoplasmic segment spans residues Glu429 to Thr456. Residue Ser438 is modified to Phosphoserine.

This sequence belongs to the major facilitator superfamily. In terms of tissue distribution, expressed in various tissues including lung, placenta, adrenal gland, liver, testis, and brain.

The protein localises to the cytoplasmic vesicle. It localises to the secretory vesicle membrane. The protein resides in the secretory vesicle. It is found in the synaptic vesicle membrane. It carries out the reaction spermine(in) + n H(+)(out) = spermine(out) + n H(+)(in). It catalyses the reaction spermidine(in) + n H(+)(out) = spermidine(out) + n H(+)(in). The catalysed reaction is serotonin(in) + n H(+)(out) = serotonin(out) + n H(+)(in). Functionally, proton-coupled polyamine antiporter involved in the translocation of polyamines from cytosol into secretory vesicles prior to their release via exocytosis. Uses the electrochemical proton gradient generated by a V-type proton-pumping ATPase to couple the efflux of protons with the uptake of a polyamine molecule. Facilitates vesicular storage of spermine and spermidine in astrocytes with an impact on glutamatergic neuronal transmission and memory formation. Upon antigen stimulation, regulates polyamine accumulation and release in mast cell secretory granules, which in turn potentiates mast cell degranulation and histamine secretion. The protein is MFS-type transporter SLC18B1 of Homo sapiens (Human).